Consider the following 353-residue polypeptide: MSEPLKPRIDFAEPLKEEPTSAFKAQQTFSEAESRTFAPAAIDERPEDEGVAEAAVDAALRPKRSLWRKMVMGGLALFGASVVGQGLQWTMNAWQTQDWVALGGCAAGALIIGAGVGSVVTEWRRLWRLRQRAHERDEARELLHSHSVGKGRAFCEKLAQQAGIDQSHPALQRWYAAIHETQNDREVVGLYAHLVQPVLDAQARREISRFAAESTLMIAVSPLALVDMAFIAWRNLRLINRIATLYGIELGYYSRLRLFRLVLLNIAFAGASELVREVGMDWMSQDLAARLSTRAAQGIGAGLLTARLGIKAMELCRPLPWIDNDKPRLGDFRRQLIGQLKETLQKSKSSPEK.

Basic and acidic residues predominate over residues 1-19 (MSEPLKPRIDFAEPLKEEP). A disordered region spans residues 1 to 35 (MSEPLKPRIDFAEPLKEEPTSAFKAQQTFSEAESR). A run of 3 helical transmembrane segments spans residues 70-90 (MVMG…LQWT), 100-120 (VALG…GSVV), and 213-233 (ESTL…FIAW).

The protein belongs to the UPF0283 family.

It localises to the cell inner membrane. This is UPF0283 membrane protein YcjF from Salmonella choleraesuis (strain SC-B67).